Consider the following 165-residue polypeptide: Peptidyl-prolyl cis-trans isomerase A (165 aa).

N-acetylmethionine is present on Met1. Val2 carries the N-acetylvaline; in Peptidyl-prolyl cis-trans isomerase A, N-terminally processed modification. Residues 7–163 enclose the PPIase cyclophilin-type domain; it reads FFDIAVDGEP…KKITIADCGQ (157 aa). The residue at position 28 (Lys28) is an N6-acetyllysine; alternate. A Glycyl lysine isopeptide (Lys-Gly) (interchain with G-Cter in SUMO2); alternate cross-link involves residue Lys28. Lys28 participates in a covalent cross-link: Glycyl lysine isopeptide (Lys-Gly) (interchain with G-Cter in ubiquitin); alternate. N6-acetyllysine is present on residues Lys44 and Lys76. A Phosphoserine modification is found at Ser77. Lys82 bears the N6-acetyllysine; alternate mark. Lys82 participates in a covalent cross-link: Glycyl lysine isopeptide (Lys-Gly) (interchain with G-Cter in SUMO2); alternate. Position 93 is a phosphothreonine (Thr93). N-linked (GlcNAc...) asparagine glycosylation occurs at Asn108. N6-acetyllysine occurs at positions 125, 131, and 133.

The protein belongs to the cyclophilin-type PPIase family. PPIase A subfamily. In terms of assembly, interacts with protein phosphatase PPP3CA/calcineurin A. Interacts with isoform 2 of BSG/CD147. Interacts with FOXO1; the interaction promotes FOXO1 dephosphorylation, nuclear accumulation and transcriptional activity. Interacts with integrin ITGA2B:ITGB3; the interaction is ROS and peptidyl-prolyl cis-trans isomerase (PPIase) activity-dependent and is increased in the presence of thrombin. Interacts with MAP3K5. Interacts with TARDBP; the interaction is dependent on the RNA-binding activity of TARDBP and the PPIase activity of PPIA/CYPA and the acetylation of PPIA/CYPA at Lys-125 favors the interaction. Interacts with HNRNPA1, HNRNPA2B1, HNRNPC, RBMX, HNRNPK and HNRNPM. Post-translationally, acetylation at Lys-125 markedly inhibits catalysis of cis to trans isomerization. PPIA acetylation also antagonizes the immunosuppressive effects of cyclosporine by inhibiting the sequential steps of cyclosporine binding and calcineurin inhibition. Acetylation at Lys-125 favors the interaction with TARDBP.

The protein localises to the cytoplasm. It is found in the secreted. Its subcellular location is the nucleus. It carries out the reaction [protein]-peptidylproline (omega=180) = [protein]-peptidylproline (omega=0). With respect to regulation, binds cyclosporin A (CsA). CsA mediates some of its effects via an inhibitory action on PPIase. Its function is as follows. Catalyzes the cis-trans isomerization of proline imidic peptide bonds in oligopeptides. Exerts a strong chemotactic effect on leukocytes partly through activation of one of its membrane receptors BSG/CD147, initiating a signaling cascade that culminates in MAPK/ERK activation. Activates endothelial cells (ECs) in a proinflammatory manner by stimulating activation of NF-kappa-B and ERK, JNK and p38 MAP-kinases and by inducing expression of adhesion molecules including SELE and VCAM1. Induces apoptosis in ECs by promoting the FOXO1-dependent expression of CCL2 and BCL2L11 which are involved in EC chemotaxis and apoptosis. In response to oxidative stress, initiates proapoptotic and antiapoptotic signaling in ECs via activation of NF-kappa-B and AKT1 and up-regulation of antiapoptotic protein BCL2. Negatively regulates MAP3K5/ASK1 kinase activity, autophosphorylation and oxidative stress-induced apoptosis mediated by MAP3K5/ASK1. Necessary for the assembly of TARDBP in heterogeneous nuclear ribonucleoprotein (hnRNP) complexes and regulates TARDBP binding to RNA UG repeats and TARDBP-dependent expression of HDAC6, ATG7 and VCP which are involved in clearance of protein aggregates. Plays an important role in platelet activation and aggregation. Regulates calcium mobilization and integrin ITGA2B:ITGB3 bidirectional signaling via increased ROS production as well as by facilitating the interaction between integrin and the cell cytoskeleton. Binds heparan sulfate glycosaminoglycans. The protein is Peptidyl-prolyl cis-trans isomerase A (PPIA) of Symphalangus syndactylus (Siamang).